Reading from the N-terminus, the 436-residue chain is GTPase Der (436 aa).

EngA-type G domains lie at 4 to 167 (PVVA…KDEE) and 176 to 351 (IKLS…ENHK). GTP-binding positions include 10 to 17 (GRPNVGKS), 57 to 61 (DTGGI), 119 to 122 (NKVD), 182 to 189 (GRPNVGKS), 229 to 233 (DTAGM), and 294 to 297 (NKWD). Residues 352 to 436 (KRVQSSTLNE…PIRIIPRKRN (85 aa)) form the KH-like domain.

It belongs to the TRAFAC class TrmE-Era-EngA-EngB-Septin-like GTPase superfamily. EngA (Der) GTPase family. As to quaternary structure, associates with the 50S ribosomal subunit.

In terms of biological role, GTPase that plays an essential role in the late steps of ribosome biogenesis. This chain is GTPase Der, found in Staphylococcus carnosus (strain TM300).